The chain runs to 219 residues: Thiopurine S-methyltransferase (219 aa).

The S-adenosyl-L-methionine site is built by Trp-10, Leu-45, Glu-66, and Arg-123.

It belongs to the class I-like SAM-binding methyltransferase superfamily. TPMT family.

The protein resides in the cytoplasm. The enzyme catalyses S-adenosyl-L-methionine + a thiopurine = S-adenosyl-L-homocysteine + a thiopurine S-methylether.. The sequence is that of Thiopurine S-methyltransferase from Bordetella pertussis (strain Tohama I / ATCC BAA-589 / NCTC 13251).